A 196-amino-acid polypeptide reads, in one-letter code: Pyridoxal 5'-phosphate synthase subunit PdxT (196 aa).

Residue Gly-47–Ser-49 coordinates L-glutamine. Cys-79 functions as the Nucleophile in the catalytic mechanism. L-glutamine contacts are provided by residues Arg-106 and Ile-134–Arg-135. Active-site charge relay system residues include His-170 and Glu-172.

The protein belongs to the glutaminase PdxT/SNO family. As to quaternary structure, in the presence of PdxS, forms a dodecamer of heterodimers. Only shows activity in the heterodimer.

It carries out the reaction aldehydo-D-ribose 5-phosphate + D-glyceraldehyde 3-phosphate + L-glutamine = pyridoxal 5'-phosphate + L-glutamate + phosphate + 3 H2O + H(+). The enzyme catalyses L-glutamine + H2O = L-glutamate + NH4(+). It functions in the pathway cofactor biosynthesis; pyridoxal 5'-phosphate biosynthesis. Its function is as follows. Catalyzes the hydrolysis of glutamine to glutamate and ammonia as part of the biosynthesis of pyridoxal 5'-phosphate. The resulting ammonia molecule is channeled to the active site of PdxS. In Halalkalibacterium halodurans (strain ATCC BAA-125 / DSM 18197 / FERM 7344 / JCM 9153 / C-125) (Bacillus halodurans), this protein is Pyridoxal 5'-phosphate synthase subunit PdxT.